The following is a 911-amino-acid chain: Protein translocase subunit SecA (911 aa).

Residues glutamine 86, 104-108 (GEGKT), and aspartate 494 each bind ATP. Residues 856 to 911 (VEGIDAPQRPAQLRFTGPSEDGQSAVTRSGTDSGATVAAGTNRRSRRQAERRGRRG) are disordered. Residues 876–889 (DGQSAVTRSGTDSG) show a composition bias toward polar residues. The segment covering 902–911 (RQAERRGRRG) has biased composition (basic and acidic residues).

This sequence belongs to the SecA family. In terms of assembly, monomer and homodimer. Part of the essential Sec protein translocation apparatus which comprises SecA, SecYEG and auxiliary proteins SecDF. Other proteins may also be involved.

It is found in the cell membrane. Its subcellular location is the cytoplasm. It carries out the reaction ATP + H2O + cellular proteinSide 1 = ADP + phosphate + cellular proteinSide 2.. Part of the Sec protein translocase complex. Interacts with the SecYEG preprotein conducting channel. Has a central role in coupling the hydrolysis of ATP to the transfer of proteins into and across the cell membrane, serving as an ATP-driven molecular motor driving the stepwise translocation of polypeptide chains across the membrane. This chain is Protein translocase subunit SecA, found in Micrococcus luteus (strain ATCC 4698 / DSM 20030 / JCM 1464 / CCM 169 / CCUG 5858 / IAM 1056 / NBRC 3333 / NCIMB 9278 / NCTC 2665 / VKM Ac-2230) (Micrococcus lysodeikticus).